The sequence spans 872 residues: Valine--tRNA ligase (872 aa).

The 'HIGH' region motif lies at 49 to 59 (PNVTGILHIGH). The 'KMSKS' region motif lies at 531 to 535 (KMSKS). Lys-534 is an ATP binding site. The stretch at 810–871 (PLIARLKKQL…IQQELDLLEQ (62 aa)) forms a coiled coil.

It belongs to the class-I aminoacyl-tRNA synthetase family. ValS type 1 subfamily. Monomer.

The protein localises to the cytoplasm. It carries out the reaction tRNA(Val) + L-valine + ATP = L-valyl-tRNA(Val) + AMP + diphosphate. In terms of biological role, catalyzes the attachment of valine to tRNA(Val). As ValRS can inadvertently accommodate and process structurally similar amino acids such as threonine, to avoid such errors, it has a 'posttransfer' editing activity that hydrolyzes mischarged Thr-tRNA(Val) in a tRNA-dependent manner. This chain is Valine--tRNA ligase, found in Helicobacter pylori (strain J99 / ATCC 700824) (Campylobacter pylori J99).